Reading from the N-terminus, the 210-residue chain is Heart- and neural crest derivatives-expressed protein 2 (210 aa).

A disordered region spans residues 81–101; the sequence is SGAGGLMQRPVKRRGTANRKE. Positions 90-101 are enriched in basic residues; it reads PVKRRGTANRKE. The bHLH domain maps to 92-144; it reads KRRGTANRKERRRTISINSAFAELRECIPNVPADTKLSKIKTLRLATSYIAYL.

As to quaternary structure, efficient DNA binding requires dimerization with another bHLH protein. In terms of tissue distribution, heart, liver and spleen.

Its subcellular location is the nucleus. Its function is as follows. Essential for cardiac morphogenesis and for the development of branchial arches. Binds DNA on E-box consensus sequence 5'-CANNTG-3'. This chain is Heart- and neural crest derivatives-expressed protein 2 (hand2), found in Xenopus laevis (African clawed frog).